The sequence spans 269 residues: Undecaprenyl-diphosphatase (269 aa).

The next 7 helical transmembrane spans lie at 41-61 (FATMFEIVIQLGAILAVVFHY), 78-98 (GFNLWFKIFIAFIPAAVIGLL), 107-127 (LFSPFTVAIALIAGAIMMIVI), 148-167 (SLLIGIAQVMSLFPGMSRSA), 184-204 (AEFSFFLAIPTMFAATTLSLL), 213-233 (LEWQALAVGFITSFLTALFVV), and 248-268 (FAYYRLAVGVLMILLVAEKIV).

The protein belongs to the UppP family.

It localises to the cell membrane. The catalysed reaction is di-trans,octa-cis-undecaprenyl diphosphate + H2O = di-trans,octa-cis-undecaprenyl phosphate + phosphate + H(+). Functionally, catalyzes the dephosphorylation of undecaprenyl diphosphate (UPP). Confers resistance to bacitracin. This is Undecaprenyl-diphosphatase from Thermoanaerobacter pseudethanolicus (strain ATCC 33223 / 39E) (Clostridium thermohydrosulfuricum).